Reading from the N-terminus, the 144-residue chain is Transcription antitermination protein NusB (144 aa).

This sequence belongs to the NusB family.

Functionally, involved in transcription antitermination. Required for transcription of ribosomal RNA (rRNA) genes. Binds specifically to the boxA antiterminator sequence of the ribosomal RNA (rrn) operons. This is Transcription antitermination protein NusB from Carboxydothermus hydrogenoformans (strain ATCC BAA-161 / DSM 6008 / Z-2901).